The chain runs to 122 residues: Large ribosomal subunit protein uL14 (122 aa).

Belongs to the universal ribosomal protein uL14 family. Part of the 50S ribosomal subunit. Forms a cluster with proteins L3 and L19. In the 70S ribosome, L14 and L19 interact and together make contacts with the 16S rRNA in bridges B5 and B8.

In terms of biological role, binds to 23S rRNA. Forms part of two intersubunit bridges in the 70S ribosome. This Borrelia turicatae (strain 91E135) protein is Large ribosomal subunit protein uL14.